The sequence spans 846 residues: Pseudolaratriene synthase, chloroplastic (846 aa).

Residues 1–58 (MSRFTSATHGLNLSIKMPISVSQVPSIRSNTSKYELQKLRSTGRSVLQTRRQLAIINM) constitute a chloroplast transit peptide. 3 residues coordinate Mg(2+): D595, D599, and D747. The short motif at 595–599 (DDIYD) is the DDXXD motif element.

Belongs to the terpene synthase family. It depends on Mg(2+) as a cofactor. In terms of tissue distribution, expressed in young and mature roots. Expressed at low levels in barks.

It localises to the plastid. Its subcellular location is the chloroplast. The enzyme catalyses (2E,6E,10E)-geranylgeranyl diphosphate = pseudolaratriene + diphosphate. It participates in terpene metabolism. Converts geranylgeranyl diphosphate to an new 5,7-fused bicyclic diterpene, named pseudolaratriene. Catalyzes the first committed step in pseudolaric acid B (PAB) biosynthesis. PAB exhibits antiproliferative activity by inhibiting microtubule polymerization, and has demonstrated antitumor properties against several cancer types. This is Pseudolaratriene synthase, chloroplastic from Pseudolarix amabilis (Golden larch).